Consider the following 529-residue polypeptide: Lanosterol 14-alpha demethylase (529 aa).

Cysteine 468 serves as a coordination point for heme.

It belongs to the cytochrome P450 family. The cofactor is heme.

It localises to the membrane. The catalysed reaction is a 14alpha-methyl steroid + 3 reduced [NADPH--hemoprotein reductase] + 3 O2 = a Delta(14) steroid + formate + 3 oxidized [NADPH--hemoprotein reductase] + 4 H2O + 4 H(+). It catalyses the reaction a 14alpha-methyl steroid + reduced [NADPH--hemoprotein reductase] + O2 = a 14alpha-hydroxymethyl steroid + oxidized [NADPH--hemoprotein reductase] + H2O + H(+). It carries out the reaction a 14alpha-hydroxymethyl steroid + reduced [NADPH--hemoprotein reductase] + O2 = a 14alpha-formyl steroid + oxidized [NADPH--hemoprotein reductase] + 2 H2O + H(+). The enzyme catalyses a 14alpha-formyl steroid + reduced [NADPH--hemoprotein reductase] + O2 = a Delta(14) steroid + formate + oxidized [NADPH--hemoprotein reductase] + H2O + 2 H(+). The catalysed reaction is lanosterol + 3 reduced [NADPH--hemoprotein reductase] + 3 O2 = 4,4-dimethyl-5alpha-cholesta-8,14,24-trien-3beta-ol + formate + 3 oxidized [NADPH--hemoprotein reductase] + 4 H2O + 4 H(+). It catalyses the reaction lanosterol + reduced [NADPH--hemoprotein reductase] + O2 = 32-hydroxylanosterol + oxidized [NADPH--hemoprotein reductase] + H2O + H(+). It carries out the reaction 32-hydroxylanosterol + reduced [NADPH--hemoprotein reductase] + O2 = 32-oxolanosterol + oxidized [NADPH--hemoprotein reductase] + 2 H2O + H(+). The enzyme catalyses 32-oxolanosterol + reduced [NADPH--hemoprotein reductase] + O2 = 4,4-dimethyl-5alpha-cholesta-8,14,24-trien-3beta-ol + formate + oxidized [NADPH--hemoprotein reductase] + H2O + 2 H(+). The catalysed reaction is eburicol + 3 reduced [NADPH--hemoprotein reductase] + 3 O2 = 14-demethyleburicol + formate + 3 oxidized [NADPH--hemoprotein reductase] + 4 H2O + 4 H(+). It catalyses the reaction eburicol + reduced [NADPH--hemoprotein reductase] + O2 = 32-hydroxyeburicol + oxidized [NADPH--hemoprotein reductase] + H2O + H(+). It carries out the reaction 32-hydroxyeburicol + reduced [NADPH--hemoprotein reductase] + O2 = 32-oxoeburicol + oxidized [NADPH--hemoprotein reductase] + 2 H2O + H(+). The enzyme catalyses 32-oxoeburicol + reduced [NADPH--hemoprotein reductase] + O2 = 14-demethyleburicol + formate + oxidized [NADPH--hemoprotein reductase] + H2O + 2 H(+). It participates in steroid biosynthesis; zymosterol biosynthesis; zymosterol from lanosterol: step 1/6. Its function is as follows. Sterol 14alpha-demethylase that plays a critical role in the third module of ergosterol biosynthesis pathway, being ergosterol the major sterol component in fungal membranes that participates in a variety of functions. The third module or late pathway involves the ergosterol synthesis itself through consecutive reactions that mainly occur in the endoplasmic reticulum (ER) membrane. In filamentous fungi, during the initial step of this module, lanosterol (lanosta-8,24-dien-3beta-ol) can be metabolized to eburicol. Sterol 14alpha-demethylase catalyzes the three-step oxidative removal of the 14alpha-methyl group (C-32) of both these sterols in the form of formate, and converts eburicol and lanosterol to 14-demethyleburicol (4,4,24-trimethylergosta-8,14,24(28)-trienol) and 4,4-dimethyl-5alpha-cholesta-8,14,24-trien-3beta-ol, respectively, which are further metabolized by other enzymes in the pathway to ergosterol. Can also use substrates not intrinsic to fungi, such as 24,25-dihydrolanosterol (DHL), producing 4,4-dimethyl-8,14-cholestadien-3-beta-ol, but at lower rates than the endogenous substrates. In Eremothecium gossypii (strain ATCC 10895 / CBS 109.51 / FGSC 9923 / NRRL Y-1056) (Yeast), this protein is Lanosterol 14-alpha demethylase (ERG11).